We begin with the raw amino-acid sequence, 151 residues long: 3-hydroxyacyl-[acyl-carrier-protein] dehydratase FabZ (151 aa).

His56 is an active-site residue.

The protein belongs to the thioester dehydratase family. FabZ subfamily.

Its subcellular location is the cytoplasm. It catalyses the reaction a (3R)-hydroxyacyl-[ACP] = a (2E)-enoyl-[ACP] + H2O. In terms of biological role, involved in unsaturated fatty acids biosynthesis. Catalyzes the dehydration of short chain beta-hydroxyacyl-ACPs and long chain saturated and unsaturated beta-hydroxyacyl-ACPs. The chain is 3-hydroxyacyl-[acyl-carrier-protein] dehydratase FabZ from Rhodopseudomonas palustris (strain HaA2).